The following is a 388-amino-acid chain: Staphopain A (388 aa).

The signal sequence occupies residues 1–25; sequence MKRNFPKLIALSLIFSLSVTPIANA. Residues 26–214 constitute a propeptide that is removed on maturation; the sequence is ESNSNIKAKD…TSQFKSNNYT (189 aa). Catalysis depends on residues cysteine 238, histidine 334, and asparagine 355.

This sequence belongs to the peptidase C47 family. As to quaternary structure, in the cytoplasm, prematurely activated/folded ScpA forms a stable non-covalent complex with ScpB. Post-translationally, cleavage leads to the activation of ScpA probably by an auto-catalytic manner.

It is found in the secreted. It catalyses the reaction Broad endopeptidase action on proteins including elastin, but rather limited hydrolysis of small-molecule substrates. Assays are conveniently made with hemoglobin, casein or Z-Phe-Arg-NHMec as substrate.. Its activity is regulated as follows. Prematurely activated/folded staphopain A is inhibited by staphostatin A (ScpB), which is probably required to protect staphylococcal cytoplasmic proteins from degradation by ScpA. Its function is as follows. Cysteine protease that plays an important role in the inhibition of host innate immune response. Cleaves host elastins found in connective tissues, pulmonary surfactant protein A in the lungs, and the chemokine receptor CXCR2 on leukocytes. Proteolytic cleavage of surfactant protein A impairs bacterial phagocytosis by neutrophils while CXCR2 degradation blocks neutrophil activation and chemotaxis. Additionally, promotes vascular leakage by activating the plasma kallikerin/kinin system, resulting in hypotension. This is Staphopain A (sspP) from Staphylococcus aureus (strain Mu50 / ATCC 700699).